The following is a 488-amino-acid chain: Long chain base biosynthesis protein 2a (488 aa).

The helical transmembrane segment at 4–24 (LPYTTALTTLFSYGLLFAFGQ) threads the bilayer. N6-(pyridoxal phosphate)lysine is present on K311.

The protein belongs to the class-II pyridoxal-phosphate-dependent aminotransferase family. Heterodimer with LCB1. Component of the serine palmitoyltransferase (SPT) complex, composed of LCB1 and LCB2. Pyridoxal 5'-phosphate is required as a cofactor.

The protein localises to the endoplasmic reticulum membrane. The enzyme catalyses L-serine + hexadecanoyl-CoA + H(+) = 3-oxosphinganine + CO2 + CoA. The protein operates within lipid metabolism; sphingolipid metabolism. Serine palmitoyltransferase (SPT). The heterodimer formed with LCB1 constitutes the catalytic core. This Oryza sativa subsp. japonica (Rice) protein is Long chain base biosynthesis protein 2a.